Here is a 155-residue protein sequence, read N- to C-terminus: Small ribosomal subunit protein uS7 (155 aa).

This sequence belongs to the universal ribosomal protein uS7 family. In terms of assembly, part of the 30S ribosomal subunit. Contacts proteins S9 and S11.

One of the primary rRNA binding proteins, it binds directly to 16S rRNA where it nucleates assembly of the head domain of the 30S subunit. Is located at the subunit interface close to the decoding center, probably blocks exit of the E-site tRNA. In Mycoplasma mycoides subsp. mycoides SC (strain CCUG 32753 / NCTC 10114 / PG1), this protein is Small ribosomal subunit protein uS7.